Consider the following 354-residue polypeptide: Dihydroorotate dehydrogenase (quinone) (354 aa).

FMN-binding positions include 70 to 74 and threonine 94; that span reads AGFDK. Residue lysine 74 participates in substrate binding. Position 119 to 123 (119 to 123) interacts with substrate; that stretch reads NAMGF. FMN-binding residues include asparagine 148 and asparagine 181. A substrate-binding site is contributed by asparagine 181. The active-site Nucleophile is the serine 184. Residue asparagine 186 coordinates substrate. FMN is bound by residues lysine 217 and threonine 245. 246 to 247 contacts substrate; sequence NT. FMN is bound by residues glycine 265, glycine 294, and 315 to 316; that span reads YS.

Belongs to the dihydroorotate dehydrogenase family. Type 2 subfamily. In terms of assembly, monomer. FMN is required as a cofactor.

It is found in the cell membrane. The enzyme catalyses (S)-dihydroorotate + a quinone = orotate + a quinol. The protein operates within pyrimidine metabolism; UMP biosynthesis via de novo pathway; orotate from (S)-dihydroorotate (quinone route): step 1/1. Functionally, catalyzes the conversion of dihydroorotate to orotate with quinone as electron acceptor. The protein is Dihydroorotate dehydrogenase (quinone) of Sulfurovum sp. (strain NBC37-1).